A 97-amino-acid chain; its full sequence is MKIRPLHDRVIVKRKEVEAKSAGGIVLTGSAAGKSTRGEILAVGNGRIMENGEVKPLDVKVGDIVIFNDGYGVKSEKIDNEDVLIMSESDILAIVEA.

Belongs to the GroES chaperonin family. In terms of assembly, heptamer of 7 subunits arranged in a ring. Interacts with the chaperonin GroEL.

It localises to the cytoplasm. In terms of biological role, together with the chaperonin GroEL, plays an essential role in assisting protein folding. The GroEL-GroES system forms a nano-cage that allows encapsulation of the non-native substrate proteins and provides a physical environment optimized to promote and accelerate protein folding. GroES binds to the apical surface of the GroEL ring, thereby capping the opening of the GroEL channel. In Proteus mirabilis (strain HI4320), this protein is Co-chaperonin GroES.